The primary structure comprises 769 residues: Homoaconitase, mitochondrial (769 aa).

The transit peptide at 1–28 (MQSRLLPSGPGRRWISLRVPNTPQRRAF) directs the protein to the mitochondrion. The [4Fe-4S] cluster site is built by C391, C460, and C463.

It belongs to the aconitase/IPM isomerase family. [4Fe-4S] cluster is required as a cofactor.

Its subcellular location is the mitochondrion. It carries out the reaction (2R,3S)-homoisocitrate = cis-homoaconitate + H2O. It functions in the pathway amino-acid biosynthesis; L-lysine biosynthesis via AAA pathway; L-alpha-aminoadipate from 2-oxoglutarate: step 3/5. Its function is as follows. Catalyzes the reversible hydration of cis-homoaconitate to (2R,3S)-homoisocitrate, a step in the alpha-aminoadipate pathway for lysine biosynthesis. The sequence is that of Homoaconitase, mitochondrial (lysA) from Aspergillus niger (strain ATCC MYA-4892 / CBS 513.88 / FGSC A1513).